A 117-amino-acid chain; its full sequence is Small ribosomal subunit protein bS6 (117 aa).

A disordered region spans residues 92-117; it reads KVDEHPEGPSIQMQKREERDNRRERR. The segment covering 105-117 has biased composition (basic and acidic residues); it reads QKREERDNRRERR.

Belongs to the bacterial ribosomal protein bS6 family.

Functionally, binds together with bS18 to 16S ribosomal RNA. This chain is Small ribosomal subunit protein bS6, found in Dinoroseobacter shibae (strain DSM 16493 / NCIMB 14021 / DFL 12).